The chain runs to 216 residues: Regulator of G-protein signaling 19 (216 aa).

Residues 1–19 (MPTPHEAEKQHTGPEEADR) show a composition bias toward basic and acidic residues. Residues 1–30 (MPTPHEAEKQHTGPEEADRPPSMSSHDAAP) form a disordered region. Ser24 carries the phosphoserine; by CK2 modification. An RGS domain is found at 90–206 (SFDKLMHSPT…LTSPTYRSLL (117 aa)). A Phosphoserine modification is found at Ser97. Ser151 carries the post-translational modification Phosphoserine; by MAPK1 and MAPK3. Positions 207–216 (LQGAPQSSEA) are interaction with GIPC.

As to quaternary structure, interacts with GIPC PDZ domain. Interacts with GNAO1. Fatty acylated. Heavily palmitoylated in the cysteine string motif. In terms of processing, phosphorylated, mainly on serine residues.

It is found in the membrane. Functionally, inhibits signal transduction by increasing the GTPase activity of G protein alpha subunits thereby driving them into their inactive GDP-bound form. Binds to G-alpha subfamily 1 members, predominantly to G(i)-alpha-3. Activity on G(z)-alpha is inhibited by phosphorylation and palmitoylation of the G-protein. The chain is Regulator of G-protein signaling 19 (Rgs19) from Rattus norvegicus (Rat).